The following is a 461-amino-acid chain: Ribulose bisphosphate carboxylase (461 aa).

Residue Asn-112 coordinates substrate. The Proton acceptor role is filled by Lys-167. Position 169 (Lys-169) interacts with substrate. Mg(2+)-binding residues include Lys-192, Asp-194, and Glu-195. Residue Lys-192 is modified to N6-carboxylysine. Residue His-288 is the Proton acceptor of the active site. Arg-289, His-322, and Ser-369 together coordinate substrate.

This sequence belongs to the RuBisCO large chain family. Type II subfamily. As to quaternary structure, homodimer. Mg(2+) serves as cofactor.

It carries out the reaction 2 (2R)-3-phosphoglycerate + 2 H(+) = D-ribulose 1,5-bisphosphate + CO2 + H2O. It catalyses the reaction D-ribulose 1,5-bisphosphate + O2 = 2-phosphoglycolate + (2R)-3-phosphoglycerate + 2 H(+). Its function is as follows. RuBisCO catalyzes two reactions: the carboxylation of D-ribulose 1,5-bisphosphate, the primary event in carbon dioxide fixation, as well as the oxidative fragmentation of the pentose substrate. Both reactions occur simultaneously and in competition at the same active site. In Rhodopseudomonas palustris (strain HaA2), this protein is Ribulose bisphosphate carboxylase.